Reading from the N-terminus, the 327-residue chain is Quinone oxidoreductase (327 aa).

Belongs to the zinc-containing alcohol dehydrogenase family. Quinone oxidoreductase subfamily. Homodimer.

The catalysed reaction is 2 a quinone + NADPH + H(+) = 2 a 1,4-benzosemiquinone + NADP(+). This Salmonella typhimurium (strain LT2 / SGSC1412 / ATCC 700720) protein is Quinone oxidoreductase (qor).